The primary structure comprises 248 residues: Proteasome subunit alpha (248 aa).

The protein belongs to the peptidase T1A family. As to quaternary structure, the 20S proteasome core is composed of 14 alpha and 14 beta subunits that assemble into four stacked heptameric rings, resulting in a barrel-shaped structure. The two inner rings, each composed of seven catalytic beta subunits, are sandwiched by two outer rings, each composed of seven alpha subunits. The catalytic chamber with the active sites is on the inside of the barrel. Has a gated structure, the ends of the cylinder being occluded by the N-termini of the alpha-subunits. Is capped at one or both ends by the proteasome regulatory ATPase, PAN.

Its subcellular location is the cytoplasm. With respect to regulation, the formation of the proteasomal ATPase PAN-20S proteasome complex, via the docking of the C-termini of PAN into the intersubunit pockets in the alpha-rings, triggers opening of the gate for substrate entry. Interconversion between the open-gate and close-gate conformations leads to a dynamic regulation of the 20S proteasome proteolysis activity. In terms of biological role, component of the proteasome core, a large protease complex with broad specificity involved in protein degradation. This Methanothermobacter thermautotrophicus (strain ATCC 29096 / DSM 1053 / JCM 10044 / NBRC 100330 / Delta H) (Methanobacterium thermoautotrophicum) protein is Proteasome subunit alpha.